The following is a 324-amino-acid chain: NADH-ubiquinone oxidoreductase chain 1 (324 aa).

Transmembrane regions (helical) follow at residues 9–29, 43–63, 75–95, 106–126, 146–166, 177–197, 228–250, 259–279, and 299–319; these read ILNP…LTLL, PNIV…KLFI, ILFI…WAPL, LAIL…LGSG, ISYE…TGGF, SIWL…STLA, LFFL…LFLG, ELTT…FLWV, and FLPL…TFAG.

The protein belongs to the complex I subunit 1 family.

It is found in the mitochondrion inner membrane. It catalyses the reaction a ubiquinone + NADH + 5 H(+)(in) = a ubiquinol + NAD(+) + 4 H(+)(out). Its function is as follows. Core subunit of the mitochondrial membrane respiratory chain NADH dehydrogenase (Complex I) that is believed to belong to the minimal assembly required for catalysis. Complex I functions in the transfer of electrons from NADH to the respiratory chain. The immediate electron acceptor for the enzyme is believed to be ubiquinone. This is NADH-ubiquinone oxidoreductase chain 1 (MT-ND1) from Tetraodon nigroviridis (Spotted green pufferfish).